The primary structure comprises 65 residues: Beta-toxin Tf4a (65 aa).

In terms of domain architecture, LCN-type CS-alpha/beta spans lysine 2–glycine 63. 4 cysteine pairs are disulfide-bonded: cysteine 12–cysteine 62, cysteine 16–cysteine 38, cysteine 24–cysteine 43, and cysteine 28–cysteine 45. Position 62 is a cysteine amide (cysteine 62).

This sequence belongs to the long (4 C-C) scorpion toxin superfamily. Sodium channel inhibitor family. Alpha subfamily. Expressed by the venom gland.

Its subcellular location is the secreted. Its function is as follows. Alpha toxins bind voltage-independently at site-3 of sodium channels (Nav) and inhibit the inactivation of the activated channels, thereby blocking neuronal transmission. This toxin is toxic to frogs but non-toxic to insect larvae (T.molitor), mammals (rats) and crustaceans (crabs) at the doses assayed. In Tityus fasciolatus (Central Brazilian scorpion), this protein is Beta-toxin Tf4a.